The chain runs to 698 residues: Cytoplasmic polyadenylation element-binding protein 3 (698 aa).

A compositionally biased stretch (basic and acidic residues) spans 1 to 11; it reads MQDDLLMDKSK. Disordered regions lie at residues 1–114 and 158–208; these read MQDD…WSTG and AQTQ…SAAA. The span at 13-28 shows a compositional bias: low complexity; the sequence is QPQPQQQQRQQQQPQP. Positions 29 to 44 are enriched in polar residues; it reads ESSVSEAPSTPLSSET. Pro residues predominate over residues 87 to 96; it reads PQQPPPPQEP. The segment covering 103–114 has biased composition (polar residues); it reads LSPSFGSTWSTG. Residues 165–185 are compositionally biased toward pro residues; it reads QPPPPAPAPQPAQPAQPPQAQ. The span at 186 to 208 shows a compositional bias: low complexity; the sequence is PPQQRRSPASPSQAPYAQRSAAA. Residues Ser192, Ser195, and Ser290 each carry the phosphoserine modification. An Asymmetric dimethylarginine modification is found at Arg308. 2 consecutive RRM domains span residues 441–532 and 549–631; these read RKVF…PWNL and KTIF…PYVL.

The protein belongs to the RRM CPEB family. Following synaptic activity, forms amyloid-like oligomers. Aggregation requires an intact actin cytoskeleton. Interacts with STAT5B; this inhibits STAT5B-mediated transcriptional activation. Interacts with E3 ubiquitin-protein ligase NEURL1; this leads to monoubiquitination and activation of CPEB3. Interacts with CAPN2; this leads to cleavage of CPEB3. Interacts (via C-terminal RNA-binding region) with TOB1; TOB1 also binds CNOT7/CAF1 and recruits it to CPEB3 to form a ternary complex. Interacts with SUMO-conjugating enzyme UBC9. Interacts with IPO5; the interaction is enhanced in a RAN-regulated manner following neuronal stimulation and mediates CPEB3 nuclear import. Interacts with exportin XPO1/CRM1. In terms of processing, activated by NEURL1-mediated monoubiquitination, resulting in the growth of new dendritic spines and increased levels of GRIA1 and GRIA2. NEURL1-mediated monoubiquitination facilitates synaptic plasticity and hippocampal-dependent memory storage. Post-translationally, under basal unstimulated conditions when CPEB3 is mainly unaggregated, sumoylated and acts as a translational repressor. Following neuronal stimulation, becomes desumoylated and aggregated which is required for the translation of mRNA targets and for dendritic filopodia formation. Following neuronal stimulation, cleaved by CAPN2 which abolishes its translational repressor activity, leading to translation of CPEB3 target mRNAs. In terms of processing, phosphorylation is enhanced by neuronal stimulation.

Its subcellular location is the cytoplasm. The protein resides in the nucleus. The protein localises to the synapse. It is found in the cell projection. It localises to the dendrite. Its subcellular location is the postsynaptic density. In terms of biological role, sequence-specific RNA-binding protein which acts as a translational repressor in the basal unstimulated state but, following neuronal stimulation, acts as a translational activator. In contrast to CPEB1, does not bind to the cytoplasmic polyadenylation element (CPE), a uridine-rich sequence element within the mRNA 3'-UTR, but binds to a U-rich loop within a stem-loop structure. Required for the consolidation and maintenance of hippocampal-based long term memory. In the basal state, binds to the mRNA 3'-UTR of the glutamate receptors GRIA2/GLUR2 mRNA and negatively regulates their translation. Also represses the translation of DLG4, GRIN1, GRIN2A and GRIN2B. When activated, acts as a translational activator of GRIA1 and GRIA2. In the basal state, suppresses SUMO2 translation but activates it following neuronal stimulation. Binds to the 3'-UTR of TRPV1 mRNA and represses TRPV1 translation which is required to maintain normal thermoception. Binds actin mRNA, leading to actin translational repression in the basal state and to translational activation following neuronal stimulation. Negatively regulates target mRNA levels by binding to TOB1 which recruits CNOT7/CAF1 to a ternary complex and this leads to target mRNA deadenylation and decay. In addition to its role in translation, binds to and inhibits the transcriptional activation activity of STAT5B without affecting its dimerization or DNA-binding activity. This, in turn, represses transcription of the STAT5B target gene EGFR which has been shown to play a role in enhancing learning and memory performance. In contrast to CPEB1, CPEB2 and CPEB4, not required for cell cycle progression. In Homo sapiens (Human), this protein is Cytoplasmic polyadenylation element-binding protein 3 (CPEB3).